A 198-amino-acid chain; its full sequence is Sulfite reductase, dissimilatory-type subunit alpha (198 aa).

Cysteine 45, cysteine 64, cysteine 67, and cysteine 70 together coordinate [4Fe-4S] cluster. Residues 55-83 (GTLSIDNKNCTRCMHCINTMPRALKIGDE) form the 4Fe-4S ferredoxin-type domain.

Heterohexamer of two alpha, two beta and two gamma subunits.

In terms of biological role, part of the complex that catalyzes the reduction of sulfite to sulfide. The alpha and beta subunits may have arisen by gene duplication. They both bind 2 iron-sulfur clusters, but the alpha subunit seems to be catalytically inactive, due to substitutions along the putative substrate access channel, and because it binds sirohydrochlorin (the dematallated form of siroheme) instead of siroheme. This chain is Sulfite reductase, dissimilatory-type subunit alpha (dsrA), found in Megalodesulfovibrio gigas (strain ATCC 19364 / DSM 1382 / NCIMB 9332 / VKM B-1759) (Desulfovibrio gigas).